The following is a 216-amino-acid chain: Pyrophosphatase PpaX (216 aa).

Asp-9 functions as the Nucleophile in the catalytic mechanism.

Belongs to the HAD-like hydrolase superfamily. PpaX family. It depends on Mg(2+) as a cofactor.

It carries out the reaction diphosphate + H2O = 2 phosphate + H(+). Functionally, hydrolyzes pyrophosphate formed during P-Ser-HPr dephosphorylation by HPrK/P. Might play a role in controlling the intracellular pyrophosphate pool. The chain is Pyrophosphatase PpaX from Bacillus cereus (strain Q1).